Consider the following 117-residue polypeptide: Large ribosomal subunit protein bL20 (117 aa).

This sequence belongs to the bacterial ribosomal protein bL20 family.

Binds directly to 23S ribosomal RNA and is necessary for the in vitro assembly process of the 50S ribosomal subunit. It is not involved in the protein synthesizing functions of that subunit. This chain is Large ribosomal subunit protein bL20, found in Finegoldia magna (strain ATCC 29328 / DSM 20472 / WAL 2508) (Peptostreptococcus magnus).